We begin with the raw amino-acid sequence, 468 residues long: ATP synthase subunit beta (468 aa).

155–162 lines the ATP pocket; the sequence is GGAGVGKT.

This sequence belongs to the ATPase alpha/beta chains family. F-type ATPases have 2 components, CF(1) - the catalytic core - and CF(0) - the membrane proton channel. CF(1) has five subunits: alpha(3), beta(3), gamma(1), delta(1), epsilon(1). CF(0) has three main subunits: a(1), b(2) and c(9-12). The alpha and beta chains form an alternating ring which encloses part of the gamma chain. CF(1) is attached to CF(0) by a central stalk formed by the gamma and epsilon chains, while a peripheral stalk is formed by the delta and b chains.

Its subcellular location is the cell inner membrane. It catalyses the reaction ATP + H2O + 4 H(+)(in) = ADP + phosphate + 5 H(+)(out). Produces ATP from ADP in the presence of a proton gradient across the membrane. The catalytic sites are hosted primarily by the beta subunits. This is ATP synthase subunit beta from Bdellovibrio bacteriovorus (strain ATCC 15356 / DSM 50701 / NCIMB 9529 / HD100).